Reading from the N-terminus, the 167-residue chain is Dual specificity protein phosphatase 1B (167 aa).

The 142-residue stretch at 24 to 165 (DLSEIQQGLF…LQQFEKSIQG (142 aa)) folds into the Tyrosine-protein phosphatase domain. Cys109 acts as the Phosphocysteine intermediate in catalysis.

It belongs to the protein-tyrosine phosphatase family. Non-receptor class dual specificity subfamily. As to quaternary structure, associates with MPK3 and MPK6. Interacts with MPK6 is promoted during HR-like responses triggered by fungal elicitors, whereas interaction with MPK3 in repressed. Expressed in flowers, seedlings, roots, leaves, and seeds. Present in stomata and meristematic cells.

Its subcellular location is the nucleus. The protein resides in the cytoplasm. The enzyme catalyses O-phospho-L-tyrosyl-[protein] + H2O = L-tyrosyl-[protein] + phosphate. It catalyses the reaction O-phospho-L-seryl-[protein] + H2O = L-seryl-[protein] + phosphate. The catalysed reaction is O-phospho-L-threonyl-[protein] + H2O = L-threonyl-[protein] + phosphate. In terms of biological role, has a dual specificity toward Ser/Thr and Tyr-containing proteins. Prevents biotic and abiotic stress responses, including ozone, oxidative stress and pathogen attacks; represses MAPK activities during hypersensitive response to limit the spread of the HR response after infection by necrotrophic pathogen such as Botrytis cinerea. May be also involved in ABA and salt responses. Dephosphorylates MPK3 and MPK6. This Arabidopsis thaliana (Mouse-ear cress) protein is Dual specificity protein phosphatase 1B (DSPTP1B).